The sequence spans 784 residues: E3 UFM1-protein ligase 1 homolog (784 aa).

Residues 405–480 form a disordered region; the sequence is SVSTQELEDD…RGGGAGNKKA (76 aa). Basic residues predominate over residues 444–454; that stretch reads KSTKKHQRGKA.

The protein belongs to the UFL1 family.

In terms of biological role, E3 UFM1-protein ligase that mediates ufmylation of target proteins. The sequence is that of E3 UFM1-protein ligase 1 homolog from Drosophila yakuba (Fruit fly).